The chain runs to 67 residues: Protein SlyX homolog (67 aa).

This sequence belongs to the SlyX family.

The protein is Protein SlyX homolog of Mesorhizobium japonicum (strain LMG 29417 / CECT 9101 / MAFF 303099) (Mesorhizobium loti (strain MAFF 303099)).